Here is a 104-residue protein sequence, read N- to C-terminus: Small ribosomal subunit protein uS10 (104 aa).

The protein belongs to the universal ribosomal protein uS10 family. In terms of assembly, part of the 30S ribosomal subunit.

Functionally, involved in the binding of tRNA to the ribosomes. The protein is Small ribosomal subunit protein uS10 of Alkaliphilus metalliredigens (strain QYMF).